Reading from the N-terminus, the 368-residue chain is Saccharopine dehydrogenase [NAD(+), L-lysine-forming] (368 aa).

2 residues coordinate L-saccharopine: Arg18 and Lys77. Lys77 serves as the catalytic Proton acceptor. Ser85 is subject to Phosphoserine. His96 functions as the Proton donor in the catalytic mechanism. Residue Gln101 coordinates L-saccharopine. Residue Arg130 coordinates NAD(+). Residues Arg131 and Phe135 each contribute to the L-saccharopine site. NAD(+) is bound by residues 203 to 204 (GR), Asp227, Thr231, Tyr251, and Val278. Residues Cys205 and Cys249 are joined by a disulfide bond. 279–281 (SCD) is a binding site for L-saccharopine. Residue 319–322 (IDHL) participates in NAD(+) binding.

Belongs to the AlaDH/PNT family. Monomer.

It carries out the reaction L-saccharopine + NAD(+) + H2O = L-lysine + 2-oxoglutarate + NADH + H(+). Its pathway is amino-acid biosynthesis; L-lysine biosynthesis via AAA pathway; L-lysine from L-alpha-aminoadipate (fungal route): step 3/3. Functionally, catalyzes the NAD(+)-dependent cleavage of saccharopine to L-lysine and 2-oxoglutarate, the final step in the alpha-aminoadipate (AAA) pathway for lysin biosynthesis. This chain is Saccharopine dehydrogenase [NAD(+), L-lysine-forming], found in Schizosaccharomyces pombe (strain 972 / ATCC 24843) (Fission yeast).